Consider the following 480-residue polypeptide: Ribosomal RNA small subunit methyltransferase F (480 aa).

S-adenosyl-L-methionine-binding positions include 126–132, Glu150, Asp177, and Asp195; that span reads AAAPGSK. The Nucleophile role is filled by Cys248.

Belongs to the class I-like SAM-binding methyltransferase superfamily. RsmB/NOP family.

It is found in the cytoplasm. It carries out the reaction cytidine(1407) in 16S rRNA + S-adenosyl-L-methionine = 5-methylcytidine(1407) in 16S rRNA + S-adenosyl-L-homocysteine + H(+). In terms of biological role, specifically methylates the cytosine at position 1407 (m5C1407) of 16S rRNA. This is Ribosomal RNA small subunit methyltransferase F from Cronobacter sakazakii (strain ATCC BAA-894) (Enterobacter sakazakii).